Here is a 400-residue protein sequence, read N- to C-terminus: Phosphoglycerate kinase (400 aa).

Substrate-binding positions include 22-24, arginine 38, 61-64, arginine 119, and arginine 152; these read DFN and HLGR. ATP-binding positions include lysine 205, glycine 296, glutamate 327, and 353–356; that span reads GGDT.

Belongs to the phosphoglycerate kinase family. As to quaternary structure, monomer.

The protein resides in the cytoplasm. The enzyme catalyses (2R)-3-phosphoglycerate + ATP = (2R)-3-phospho-glyceroyl phosphate + ADP. It functions in the pathway carbohydrate degradation; glycolysis; pyruvate from D-glyceraldehyde 3-phosphate: step 2/5. This is Phosphoglycerate kinase from Campylobacter jejuni subsp. jejuni serotype O:23/36 (strain 81-176).